The following is a 358-amino-acid chain: Cyclin-D1-binding protein 1 (358 aa).

Interaction with TCF3 regions lie at residues 1–183 (MESA…VDLV) and 149–358 (ISYN…EVES). 2 interaction with RPLP0 regions span residues 1 to 189 (MESA…AHEE) and 238 to 358 (LIIP…EVES). A required for interaction with CCND1 region spans residues 1–207 (MESAAVSAAP…DPYCGLLNDI (207 aa)).

It belongs to the CCNDBP1 family. As to quaternary structure, interacts with CCND1 and GRAP2. May also interact with COPS5, RPLP0, SIRT6, SYF2 and TCF3. Phosphorylated.

It localises to the cytoplasm. The protein resides in the nucleus. Functionally, may negatively regulate cell cycle progression. May act at least in part via inhibition of the cyclin-D1/CDK4 complex, thereby preventing phosphorylation of RB1 and blocking E2F-dependent transcription. This is Cyclin-D1-binding protein 1 (CCNDBP1) from Bos taurus (Bovine).